The primary structure comprises 1048 residues: FERM, ARHGEF and pleckstrin domain-containing protein 1 (1048 aa).

Residues M1–G37 are disordered. Phosphoserine occurs at positions 20 and 23. Position 24 is a phosphothreonine (T24). One can recognise an FERM domain in the interval M40 to E320. S340, S373, S389, S403, S427, S433, and S437 each carry phosphoserine. The segment at F361–K536 is disordered. A compositionally biased stretch (polar residues) spans T371–L395. Composition is skewed to polar residues over residues S472–G491 and V498–P513. S512 and S516 each carry phosphoserine. Residues K542–T733 form the DH domain. One can recognise a PH 1 domain in the interval E762 to D859. Residues S836, S875, and S881 each carry the phosphoserine modification. The segment at N865–A907 is disordered. Position 886 is a phosphothreonine (T886). S892, S899, and S902 each carry phosphoserine. The region spanning E935–S1032 is the PH 2 domain.

Interacts with CADM1. Interacts with RAC1. Detected in brain cortex, hippocampus, striatum, olfactory bulb, cerebellum and hindbrain (at protein level).

The protein resides in the cell membrane. It localises to the synapse. It is found in the synaptosome. Its subcellular location is the cytoplasm. The protein localises to the cytosol. The protein resides in the cell projection. It localises to the filopodium. It is found in the dendrite. Its subcellular location is the dendritic spine. In terms of biological role, functions as a guanine nucleotide exchange factor for RAC1. May play a role in semaphorin signaling. Plays a role in the assembly and disassembly of dendritic filopodia, the formation of dendritic spines, regulation of dendrite length and ultimately the formation of synapses. The polypeptide is FERM, ARHGEF and pleckstrin domain-containing protein 1 (Farp1) (Mus musculus (Mouse)).